Here is a 355-residue protein sequence, read N- to C-terminus: UDP-N-acetylglucosamine--N-acetylmuramyl-(pentapeptide) pyrophosphoryl-undecaprenol N-acetylglucosamine transferase (355 aa).

Residues 15–17 (TGG), asparagine 127, arginine 163, serine 191, isoleucine 244, 263–268 (ALTVSE), and glutamine 288 each bind UDP-N-acetyl-alpha-D-glucosamine.

The protein belongs to the glycosyltransferase 28 family. MurG subfamily.

The protein localises to the cell inner membrane. The catalysed reaction is di-trans,octa-cis-undecaprenyl diphospho-N-acetyl-alpha-D-muramoyl-L-alanyl-D-glutamyl-meso-2,6-diaminopimeloyl-D-alanyl-D-alanine + UDP-N-acetyl-alpha-D-glucosamine = di-trans,octa-cis-undecaprenyl diphospho-[N-acetyl-alpha-D-glucosaminyl-(1-&gt;4)]-N-acetyl-alpha-D-muramoyl-L-alanyl-D-glutamyl-meso-2,6-diaminopimeloyl-D-alanyl-D-alanine + UDP + H(+). It functions in the pathway cell wall biogenesis; peptidoglycan biosynthesis. Cell wall formation. Catalyzes the transfer of a GlcNAc subunit on undecaprenyl-pyrophosphoryl-MurNAc-pentapeptide (lipid intermediate I) to form undecaprenyl-pyrophosphoryl-MurNAc-(pentapeptide)GlcNAc (lipid intermediate II). This chain is UDP-N-acetylglucosamine--N-acetylmuramyl-(pentapeptide) pyrophosphoryl-undecaprenol N-acetylglucosamine transferase, found in Shigella boydii serotype 18 (strain CDC 3083-94 / BS512).